Reading from the N-terminus, the 345-residue chain is D-erythrose-4-phosphate dehydrogenase (345 aa).

11–12 (RI) serves as a coordination point for NAD(+). Residues 158–160 (SCT), arginine 204, 217–218 (TK), and arginine 240 each bind substrate. Catalysis depends on cysteine 159, which acts as the Nucleophile. Asparagine 322 contacts NAD(+).

Belongs to the glyceraldehyde-3-phosphate dehydrogenase family. Epd subfamily. In terms of assembly, homotetramer.

The protein localises to the cytoplasm. The enzyme catalyses D-erythrose 4-phosphate + NAD(+) + H2O = 4-phospho-D-erythronate + NADH + 2 H(+). It participates in cofactor biosynthesis; pyridoxine 5'-phosphate biosynthesis; pyridoxine 5'-phosphate from D-erythrose 4-phosphate: step 1/5. Catalyzes the NAD-dependent conversion of D-erythrose 4-phosphate to 4-phosphoerythronate. This Vibrio parahaemolyticus serotype O3:K6 (strain RIMD 2210633) protein is D-erythrose-4-phosphate dehydrogenase.